We begin with the raw amino-acid sequence, 350 residues long: Beta-hexosaminidase (350 aa).

Substrate contacts are provided by residues Asp-73, Arg-81, Arg-148, and 178–179 (KH). The active-site Proton donor/acceptor is His-191. Asp-262 (nucleophile) is an active-site residue.

It belongs to the glycosyl hydrolase 3 family. NagZ subfamily.

The protein localises to the cytoplasm. The enzyme catalyses Hydrolysis of terminal non-reducing N-acetyl-D-hexosamine residues in N-acetyl-beta-D-hexosaminides.. It functions in the pathway cell wall biogenesis; peptidoglycan recycling. Plays a role in peptidoglycan recycling by cleaving the terminal beta-1,4-linked N-acetylglucosamine (GlcNAc) from peptide-linked peptidoglycan fragments, giving rise to free GlcNAc, anhydro-N-acetylmuramic acid and anhydro-N-acetylmuramic acid-linked peptides. This chain is Beta-hexosaminidase, found in Bordetella avium (strain 197N).